Consider the following 116-residue polypeptide: S-adenosylmethionine decarboxylase proenzyme (116 aa).

Ser63 serves as the catalytic Schiff-base intermediate with substrate; via pyruvic acid. Ser63 carries the post-translational modification Pyruvic acid (Ser); by autocatalysis. Catalysis depends on His68, which acts as the Proton acceptor; for processing activity. Cys83 functions as the Proton donor; for catalytic activity in the catalytic mechanism.

Belongs to the prokaryotic AdoMetDC family. Type 1 subfamily. As to quaternary structure, heterotetramer of two alpha and two beta chains arranged as a dimer of alpha/beta heterodimers. Pyruvate serves as cofactor. Post-translationally, is synthesized initially as an inactive proenzyme. Formation of the active enzyme involves a self-maturation process in which the active site pyruvoyl group is generated from an internal serine residue via an autocatalytic post-translational modification. Two non-identical subunits are generated from the proenzyme in this reaction, and the pyruvate is formed at the N-terminus of the alpha chain, which is derived from the carboxyl end of the proenzyme. The post-translation cleavage follows an unusual pathway, termed non-hydrolytic serinolysis, in which the side chain hydroxyl group of the serine supplies its oxygen atom to form the C-terminus of the beta chain, while the remainder of the serine residue undergoes an oxidative deamination to produce ammonia and the pyruvoyl group blocking the N-terminus of the alpha chain.

The catalysed reaction is S-adenosyl-L-methionine + H(+) = S-adenosyl 3-(methylsulfanyl)propylamine + CO2. It participates in amine and polyamine biosynthesis; S-adenosylmethioninamine biosynthesis; S-adenosylmethioninamine from S-adenosyl-L-methionine: step 1/1. In terms of biological role, catalyzes the decarboxylation of S-adenosylmethionine to S-adenosylmethioninamine (dcAdoMet), the propylamine donor required for the synthesis of the polyamines spermine and spermidine from the diamine putrescine. The protein is S-adenosylmethionine decarboxylase proenzyme of Clostridium botulinum (strain Okra / Type B1).